Here is a 274-residue protein sequence, read N- to C-terminus: Penicillin-insensitive murein endopeptidase (274 aa).

The N-terminal stretch at 1–19 (MKNTVIALLALLASAGSLA) is a signal peptide. Intrachain disulfides connect C44–C265, C187–C235, and C216–C223. Zn(2+) contacts are provided by H110, H113, D120, D147, H150, and H211. Residues 224–263 (EDQAPPPPGDGCGAELQSWFEPPKPGSTPPVKKTPPPLPP) form a disordered region. Residues 245-263 (PPKPGSTPPVKKTPPPLPP) are compositionally biased toward pro residues.

The protein belongs to the peptidase M74 family. As to quaternary structure, dimer. It depends on Zn(2+) as a cofactor.

The protein localises to the periplasm. Functionally, murein endopeptidase that cleaves the D-alanyl-meso-2,6-diamino-pimelyl amide bond that connects peptidoglycan strands. Likely plays a role in the removal of murein from the sacculus. This is Penicillin-insensitive murein endopeptidase from Klebsiella pneumoniae subsp. pneumoniae (strain ATCC 700721 / MGH 78578).